The chain runs to 426 residues: Enolase (426 aa).

A (2R)-2-phosphoglycerate-binding site is contributed by Q163. The active-site Proton donor is E205. Residues D242, E285, and D312 each contribute to the Mg(2+) site. (2R)-2-phosphoglycerate is bound by residues K337, R366, S367, and K388. Catalysis depends on K337, which acts as the Proton acceptor.

This sequence belongs to the enolase family. Mg(2+) serves as cofactor.

Its subcellular location is the cytoplasm. It localises to the secreted. The protein resides in the cell surface. It catalyses the reaction (2R)-2-phosphoglycerate = phosphoenolpyruvate + H2O. The protein operates within carbohydrate degradation; glycolysis; pyruvate from D-glyceraldehyde 3-phosphate: step 4/5. Functionally, catalyzes the reversible conversion of 2-phosphoglycerate (2-PG) into phosphoenolpyruvate (PEP). It is essential for the degradation of carbohydrates via glycolysis. This is Enolase from Desulfosudis oleivorans (strain DSM 6200 / JCM 39069 / Hxd3) (Desulfococcus oleovorans).